The sequence spans 64 residues: Large ribosomal subunit protein bL33 (64 aa).

Belongs to the bacterial ribosomal protein bL33 family.

In Synechococcus elongatus (strain ATCC 33912 / PCC 7942 / FACHB-805) (Anacystis nidulans R2), this protein is Large ribosomal subunit protein bL33.